Reading from the N-terminus, the 201-residue chain is Small ribosomal subunit protein uS4 (201 aa).

The segment at 27–47 (SKKNYPPGQHGNSRKRKTSEY) is disordered. In terms of domain architecture, S4 RNA-binding spans 92–152 (GRLDNVVYRL…EKSKSMEVIA (61 aa)).

It belongs to the universal ribosomal protein uS4 family. Part of the 30S ribosomal subunit. Contacts protein S5. The interaction surface between S4 and S5 is involved in control of translational fidelity.

Functionally, one of the primary rRNA binding proteins, it binds directly to 16S rRNA where it nucleates assembly of the body of the 30S subunit. With S5 and S12 plays an important role in translational accuracy. The protein is Small ribosomal subunit protein uS4 of Parabacteroides distasonis (strain ATCC 8503 / DSM 20701 / CIP 104284 / JCM 5825 / NCTC 11152).